A 184-amino-acid polypeptide reads, in one-letter code: Elongation factor P (184 aa).

This sequence belongs to the elongation factor P family.

Its subcellular location is the cytoplasm. It functions in the pathway protein biosynthesis; polypeptide chain elongation. In terms of biological role, involved in peptide bond synthesis. Stimulates efficient translation and peptide-bond synthesis on native or reconstituted 70S ribosomes in vitro. Probably functions indirectly by altering the affinity of the ribosome for aminoacyl-tRNA, thus increasing their reactivity as acceptors for peptidyl transferase. The polypeptide is Elongation factor P (Delftia acidovorans (strain DSM 14801 / SPH-1)).